A 548-amino-acid chain; its full sequence is Tripartite motif-containing protein 55 (548 aa).

An RING-type zinc finger spans residues phenylalanine 10–glycine 66. The segment at asparagine 103–serine 145 adopts a B box-type zinc-finger fold. Zn(2+) is bound by residues cysteine 124, histidine 127, cysteine 147, and histidine 153. A coiled-coil region spans residues glutamine 168 to isoleucine 248. A COS domain is found at methionine 269–tyrosine 327. Positions phenylalanine 326–glutamate 532 are disordered. Acidic residues-rich tracts occupy residues arginine 328–glycine 339 and glycine 347–glutamate 360. 2 stretches are compositionally biased toward low complexity: residues valine 484 to serine 496 and glutamate 512 to serine 531.

As to quaternary structure, homooligomer and heterooligomer. Interacts with titin/TTN. Interacts with myosins. Interacts with SQSTM1 and NBR1. Isoform 4 may not able to interact with isoform 1, isoform 2 and isoform 3. Probably interacts with TRIM63 and TRIM54. Post-translationally, targeted for degradation through the proteasomal and lysosomal pathways in the presence of SUMO3. In terms of tissue distribution, highly expressed in muscle. Low-level expression in liver.

The protein resides in the nucleus. Its subcellular location is the cytoplasm. It catalyses the reaction S-ubiquitinyl-[E2 ubiquitin-conjugating enzyme]-L-cysteine + [acceptor protein]-L-lysine = [E2 ubiquitin-conjugating enzyme]-L-cysteine + N(6)-ubiquitinyl-[acceptor protein]-L-lysine.. E3 ubiquitin ligase that plays an important role in regulating cardiac development and contractility, muscle growth, metabolism, and fiber-type differentiation. Acts as a critical factor that regulates cardiomyocyte size during development in concert with TRIM63 by regulating E2F1-mediated gene expression. Plays a role in apoptosis induction in cardiomyocytes by promoting ubiquitination of the DUSP1 phosphatase. Promotes non-canonical NF-kappa-B signaling and B-cell-mediated immune responses by mediating NFKB2 'Lys-48'-linked ubiquitination and processing. In turn, NFKB2 is further processed by valosin-containing protein/VCP, an ATPase that mediates ubiquitin-dependent protein degradation by the proteasome. May play a role in preventing macrophages from producing inflammatory factors and migrating by downregulating the level of nuclear NF-kappa-B subunit RELA. Also modifies PPARG via polyubiquitination and accelerates PPARG proteasomal degradation to inhibit its activity. The polypeptide is Tripartite motif-containing protein 55 (TRIM55) (Homo sapiens (Human)).